The primary structure comprises 273 residues: MTDIHQLWIAAILGLVEGLTEFLPVSSTGHMILVGHLLGFEGNKAETFEVVIQLGSILAVVVMFWRRLFGLIGIHFGEVPHEGSGQGRLTLIHILLGMVPAVVIGLLLHDQIKTLFNPVNVMYALVVGGVLLIAAELLKPKRPKSPGVDDITYRQAFMIGCFQCLALWPGFSRSGATISGGMLVGVSRYAASEFSFLLAVPMMIGATGLDLYKSMGFLSMADFPMFAVGFVTAFIVALIAIKSFLHIIKRISFIPFAIYRFIVAAAVYALFVL.

Helical transmembrane passes span 7-27, 45-65, 89-109, 115-135, 152-171, 189-209, 221-241, and 253-273; these read LWIA…PVSS, AETF…VMFW, LTLI…LLLH, LFNP…LIAA, TYRQ…WPGF, YAAS…ATGL, ADFP…LIAI, and FIPF…LFVL.

This sequence belongs to the UppP family.

The protein localises to the cell inner membrane. It catalyses the reaction di-trans,octa-cis-undecaprenyl diphosphate + H2O = di-trans,octa-cis-undecaprenyl phosphate + phosphate + H(+). In terms of biological role, catalyzes the dephosphorylation of undecaprenyl diphosphate (UPP). Confers resistance to bacitracin. In Erwinia tasmaniensis (strain DSM 17950 / CFBP 7177 / CIP 109463 / NCPPB 4357 / Et1/99), this protein is Undecaprenyl-diphosphatase.